The sequence spans 708 residues: Solute carrier family 15 member 1 (708 aa).

A helical membrane pass occupies residues 1–21; that stretch reads MGMSKSHSFFGYPLSIFFIVV. Over 22-53 the chain is Extracellular; sequence NEFCERFSYYGMRAILILYFTNFISWDDNLST. The N-linked (GlcNAc...) asparagine glycan is linked to Asn50. The helical transmembrane segment at 54 to 74 threads the bilayer; it reads AIYHTFVALCYLTPILGALIA. The Cytoplasmic portion of the chain corresponds to 75–82; that stretch reads DSWLGKFK. The chain crosses the membrane as a helical span at residues 83–103; it reads TIVSLSIVYTIGQAVTSVSSI. The Extracellular portion of the chain corresponds to 104-118; it reads NDLTDHNHDGTPDSL. A helical membrane pass occupies residues 119-139; it reads PVHVVLSLIGLALIALGTGGI. Residues 140-161 are Cytoplasmic-facing; it reads KPCVSAFGGDQFEEGQEKQRNR. Residues 162–182 form a helical membrane-spanning segment; that stretch reads FFSIFYLAINAGSLLSTIITP. Residues 183-198 are Extracellular-facing; that stretch reads MLRVQQCGIHSKQACY. Residues 199–219 form a helical membrane-spanning segment; it reads PLAFGVPAALMAVALIVFVLG. The Cytoplasmic segment spans residues 220–276; the sequence is SGMYKKFKPQGNIMGKVAKCIGFAIKNRFRHRSKAFPKREHWLDWAKEKYDERLISQ. Residues 277 to 297 traverse the membrane as a helical segment; that stretch reads IKMVTRVMFLYIPLPMFWALF. Over 298–327 the chain is Extracellular; sequence DQQGSRWTLQATTMSGKIGALEIQPDQMQT. A helical membrane pass occupies residues 328–348; that stretch reads VNAILIVIMVPIFDAVLYPLI. The Cytoplasmic segment spans residues 349 to 361; the sequence is AKCGFNFTSLKKM. A helical membrane pass occupies residues 362–382; it reads AVGMVLASMAFVVAAIVQVEI. Over 383 to 584 the chain is Extracellular; that stretch reads DKTLPVFPKG…SANTVNMALQ (202 aa). The segment at 383–584 is extracellular domain (ECD); that stretch reads DKTLPVFPKG…SANTVNMALQ (202 aa). Residues Asn404, Asn408, Asn439, Asn509, Asn514, and Asn562 are each glycosylated (N-linked (GlcNAc...) asparagine). Residues 585-605 form a helical membrane-spanning segment; the sequence is IPQYFLLTCGEVVFSVTGLEF. Residues 606 to 619 lie on the Cytoplasmic side of the membrane; the sequence is SYSQAPSNMKSVLQ. The helical transmembrane segment at 620 to 640 threads the bilayer; that stretch reads AGWLLTVAVGNIIVLIVAGAG. At 641-645 the chain is on the extracellular side; sequence QFSKQ. The chain crosses the membrane as a helical span at residues 646 to 666; it reads WAEYILFAALLLVVCVIFAIM. The Cytoplasmic segment spans residues 667 to 708; that stretch reads ARFYTYINPAEIEAQFDEDEKKNRLEKSNPYFMSGANSQKQM.

The protein belongs to the major facilitator superfamily. Proton-dependent oligopeptide transporter (POT/PTR) (TC 2.A.17) family. In terms of assembly, interacts (via extracellular domain region) with trypsin. Expressed in small intestine.

It is found in the apical cell membrane. The catalysed reaction is a dipeptide(out) + H(+)(out) = a dipeptide(in) + H(+)(in). It catalyses the reaction an L-amino acid tripeptide(out) + H(+)(out) = an L-amino acid tripeptide(in) + H(+)(in). It carries out the reaction L-alanyl-L-lysine(out) + H(+)(out) = L-alanyl-L-lysine(in) + H(+)(in). The enzyme catalyses L-alanyl-L-proline(out) + H(+)(out) = L-alanyl-L-proline(in) + H(+)(in). The catalysed reaction is L-alanyl-L-valine(out) + H(+)(out) = L-alanyl-L-valine(in) + H(+)(in). It catalyses the reaction carnosine(out) + H(+)(out) = carnosine(in) + H(+)(in). It carries out the reaction glycyl-L-glutamine(out) + H(+)(out) = glycyl-L-glutamine(in) + H(+)(in). The enzyme catalyses glycyl-L-leucine(out) + H(+)(out) = glycyl-L-leucine(in) + H(+)(in). The catalysed reaction is glycyl-L-proline(out) + H(+)(out) = glycyl-L-proline(in) + H(+)(in). It catalyses the reaction glycyl-sarcosine(out) + H(+)(out) = glycyl-sarcosine(in) + H(+)(in). It carries out the reaction L-leucyl-L-leucine(out) + H(+)(out) = L-leucyl-L-leucine(in) + H(+)(in). The enzyme catalyses L-leucyl-L-proline(out) + H(+)(out) = L-leucyl-L-proline(in) + H(+)(in). The catalysed reaction is L-phenylalanyl-L-leucine(out) + H(+)(out) = L-phenylalanyl-L-leucine(in) + H(+)(in). It catalyses the reaction L-phenylalanyl-L-phenylalanine(out) + H(+)(out) = L-phenylalanyl-L-phenylalanine(in) + H(+)(in). It carries out the reaction L-lysyl-glycine(out) + H(+)(out) = L-lysyl-glycine(in) + H(+)(in). The enzyme catalyses L-tyrosylglycine(out) + H(+)(out) = L-tyrosylglycine(in) + H(+)(in). The catalysed reaction is L-alanyl-L-aspartate(out) + 2 H(+)(out) = L-alanyl-L-aspartate(in) + 2 H(+)(in). It catalyses the reaction L-aspartyl-glycine(out) + 2 H(+)(out) = L-aspartyl-glycine(in) + 2 H(+)(in). It carries out the reaction glycyl-L-aspartate(out) + 2 H(+)(out) = glycyl-L-aspartate(in) + 2 H(+)(in). The enzyme catalyses glycyl-L-glutamate(out) + 2 H(+)(out) = glycyl-L-glutamate(in) + 2 H(+)(in). The catalysed reaction is L-alanyl-L-leucyl-L-alanine(out) + H(+)(out) = L-alanyl-L-leucyl-L-alanine(in) + H(+)(in). It catalyses the reaction L-alanyl-L-prolylglycine(out) + H(+)(out) = L-alanyl-L-prolylglycine(in) + H(+)(in). It carries out the reaction glycylglycyl-L-isoleucine(out) + H(+)(out) = glycylglycyl-L-isoleucine(in) + H(+)(in). The enzyme catalyses glycylglycyl-L-proline(out) + H(+)(out) = glycylglycyl-L-proline(in) + H(+)(in). The catalysed reaction is L-methionyl-L-phenylalanyl-L-methionine(out) + H(+)(out) = L-methionyl-L-phenylalanyl-L-methionine(in) + H(+)(in). It catalyses the reaction N-acetyl-D-muramoyl-L-alanyl-D-isoglutamine(out) + 2 H(+)(out) = N-acetyl-D-muramoyl-L-alanyl-D-isoglutamine(in) + 2 H(+)(in). It carries out the reaction N(alpha)-formyl-L-methionyl-L-leucyl-L-phenylalanine(out) + 2 H(+)(out) = N(alpha)-formyl-L-methionyl-L-leucyl-L-phenylalanine(in) + 2 H(+)(in). In terms of biological role, electrogenic proton-coupled amino-acid transporter that transports oligopeptides of 2 to 4 amino acids with a preference for dipeptides. Transports neutral and monovalently charged peptides with a proton to peptide stoichiometry of 1:1 or 2:1. Primarily responsible for the absorption of dietary di- and tripeptides from the small intestinal lumen. Mediates transepithelial transport of muramyl and N-formylated bacterial dipeptides contributing to recognition of pathogenic bacteria by the mucosal immune system. In Homo sapiens (Human), this protein is Solute carrier family 15 member 1.